Reading from the N-terminus, the 301-residue chain is MYAPVESNEGFNFKPELPTSSAYYRLLKKLRRQVGHAIRDFNMIEDGDKVMVCVSGGKDSYTLLDILLQFKRIAPINFDIVAVNLDQKQPGFPEDVLPRYMEENNIPYYILEKDTYSITKRLTPEGKTYCAVCSRLRRGSLYGFAQEIGATKVALGHHRDDIIATFFLNLFHGGSLKAMPPKLLSSDKKNILIRPLAYVEEKDIIKYAELRKFPIIPCNLCGSQENLQRAMINEMLREWDRQYPKRLHSIFGALQNVSPSQLADRDLFDFEVLDSQRELDFKDPEELKKRLDVVNLSFAAE.

A PP-loop motif motif is present at residues 55 to 60 (SGGKDS). Cys-130, Cys-133, and Cys-221 together coordinate [4Fe-4S] cluster.

This sequence belongs to the TtcA family. In terms of assembly, homodimer. It depends on Mg(2+) as a cofactor. [4Fe-4S] cluster serves as cofactor.

It is found in the cytoplasm. The catalysed reaction is cytidine(32) in tRNA + S-sulfanyl-L-cysteinyl-[cysteine desulfurase] + AH2 + ATP = 2-thiocytidine(32) in tRNA + L-cysteinyl-[cysteine desulfurase] + A + AMP + diphosphate + H(+). It functions in the pathway tRNA modification. Catalyzes the ATP-dependent 2-thiolation of cytidine in position 32 of tRNA, to form 2-thiocytidine (s(2)C32). The sulfur atoms are provided by the cysteine/cysteine desulfurase (IscS) system. This chain is tRNA-cytidine(32) 2-sulfurtransferase, found in Acinetobacter baumannii (strain SDF).